The following is an 86-amino-acid chain: Small muscular protein (86 aa).

A disordered region spans residues 20–64; sequence MGAFRPGAGQPPRRKECTPEVEEGVPPTSDEEKKPIPGAKKLPGP.

The protein belongs to the SMPX family.

Functionally, plays a role in the regulatory network through which muscle cells coordinate their structural and functional states during growth, adaptation, and repair. In Pongo abelii (Sumatran orangutan), this protein is Small muscular protein (SMPX).